Reading from the N-terminus, the 84-residue chain is UPF0153 protein PA1578.1 (84 aa).

The protein belongs to the UPF0153 family.

This chain is UPF0153 protein PA1578.1, found in Pseudomonas aeruginosa (strain ATCC 15692 / DSM 22644 / CIP 104116 / JCM 14847 / LMG 12228 / 1C / PRS 101 / PAO1).